Reading from the N-terminus, the 257-residue chain is NAD-capped RNA hydrolase NudC (257 aa).

2 residues coordinate substrate: lysine 25 and arginine 69. Zn(2+) contacts are provided by cysteine 98 and cysteine 101. Glutamate 111 contacts substrate. Residues cysteine 116 and cysteine 119 each contribute to the Zn(2+) site. A substrate-binding site is contributed by tyrosine 124. The 124-residue stretch at 125–248 (PQIAPCIIVA…TVARRLIEDT (124 aa)) folds into the Nudix hydrolase domain. Positions 158, 174, and 178 each coordinate a divalent metal cation. The Nudix box motif lies at 159 to 180 (GFVEVGETLEQAVAREVMEESG). 192 to 199 (QPWPFPQS) contacts substrate. Glutamate 219 contributes to the a divalent metal cation binding site. Alanine 241 is a substrate binding site.

Belongs to the Nudix hydrolase family. NudC subfamily. As to quaternary structure, homodimer. It depends on Mg(2+) as a cofactor. Mn(2+) is required as a cofactor. The cofactor is Zn(2+).

The enzyme catalyses a 5'-end NAD(+)-phospho-ribonucleoside in mRNA + H2O = a 5'-end phospho-adenosine-phospho-ribonucleoside in mRNA + beta-nicotinamide D-ribonucleotide + 2 H(+). It catalyses the reaction NAD(+) + H2O = beta-nicotinamide D-ribonucleotide + AMP + 2 H(+). It carries out the reaction NADH + H2O = reduced beta-nicotinamide D-ribonucleotide + AMP + 2 H(+). MRNA decapping enzyme that specifically removes the nicotinamide adenine dinucleotide (NAD) cap from a subset of mRNAs by hydrolyzing the diphosphate linkage to produce nicotinamide mononucleotide (NMN) and 5' monophosphate mRNA. The NAD-cap is present at the 5'-end of some mRNAs and stabilizes RNA against 5'-processing. Has preference for mRNAs with a 5'-end purine. Catalyzes the hydrolysis of a broad range of dinucleotide pyrophosphates. This is NAD-capped RNA hydrolase NudC from Escherichia coli (strain 55989 / EAEC).